A 259-amino-acid chain; its full sequence is uncharacterized protein (259 aa).

The signal sequence occupies residues 1-22; sequence MKHSKKLLLCISFLLITVFISG. A lipid anchor (N-palmitoyl cysteine) is attached at Cys-23. Residue Cys-23 is the site of S-diacylglycerol cysteine attachment.

Belongs to the staphylococcal tandem lipoprotein family.

Its subcellular location is the cell membrane. This is an uncharacterized protein from Staphylococcus epidermidis (strain ATCC 35984 / DSM 28319 / BCRC 17069 / CCUG 31568 / BM 3577 / RP62A).